The following is a 112-amino-acid chain: PTS system lactose-specific EIIA component (112 aa).

Positions 6-104 (EEISMVGFAL…TRYMIRMFKR (99 aa)) constitute a PTS EIIA type-3 domain. The active-site Tele-phosphohistidine intermediate is the His-80. His-80 is modified (phosphohistidine; by HPr). Asp-83 provides a ligand contact to Mg(2+).

In terms of assembly, homotrimer. It depends on Mg(2+) as a cofactor.

The protein localises to the cytoplasm. Functionally, the phosphoenolpyruvate-dependent sugar phosphotransferase system (sugar PTS), a major carbohydrate active transport system, catalyzes the phosphorylation of incoming sugar substrates concomitantly with their translocation across the cell membrane. The enzyme II LacEF PTS system is involved in lactose transport. In Lacticaseibacillus casei (Lactobacillus casei), this protein is PTS system lactose-specific EIIA component.